Consider the following 63-residue polypeptide: Large ribosomal subunit protein uL29 (63 aa).

The protein belongs to the universal ribosomal protein uL29 family.

The protein is Large ribosomal subunit protein uL29 of Pseudoalteromonas translucida (strain TAC 125).